Reading from the N-terminus, the 572-residue chain is Urease subunit alpha (572 aa).

One can recognise a Urease domain in the interval 131–572 (GGIDAHIHFI…LPLAQRYFLF (442 aa)). Histidine 136, histidine 138, and lysine 219 together coordinate Ni(2+). Lysine 219 is modified (N6-carboxylysine). Histidine 221 provides a ligand contact to substrate. Residues histidine 248 and histidine 274 each contribute to the Ni(2+) site. Histidine 322 acts as the Proton donor in catalysis. Aspartate 362 is a binding site for Ni(2+).

Belongs to the metallo-dependent hydrolases superfamily. Urease alpha subunit family. In terms of assembly, heterotrimer of UreA (gamma), UreB (beta) and UreC (alpha) subunits. Three heterotrimers associate to form the active enzyme. Ni cation serves as cofactor. Post-translationally, carboxylation allows a single lysine to coordinate two nickel ions.

Its subcellular location is the cytoplasm. The enzyme catalyses urea + 2 H2O + H(+) = hydrogencarbonate + 2 NH4(+). It functions in the pathway nitrogen metabolism; urea degradation; CO(2) and NH(3) from urea (urease route): step 1/1. This Thermosynechococcus vestitus (strain NIES-2133 / IAM M-273 / BP-1) protein is Urease subunit alpha.